The chain runs to 310 residues: N-acetyl-gamma-glutamyl-phosphate reductase (310 aa).

The active site involves cysteine 117.

This sequence belongs to the NAGSA dehydrogenase family. Type 2 subfamily.

Its subcellular location is the cytoplasm. It carries out the reaction N-acetyl-L-glutamate 5-semialdehyde + phosphate + NADP(+) = N-acetyl-L-glutamyl 5-phosphate + NADPH + H(+). Its pathway is amino-acid biosynthesis; L-arginine biosynthesis; N(2)-acetyl-L-ornithine from L-glutamate: step 3/4. In terms of biological role, catalyzes the NADPH-dependent reduction of N-acetyl-5-glutamyl phosphate to yield N-acetyl-L-glutamate 5-semialdehyde. The sequence is that of N-acetyl-gamma-glutamyl-phosphate reductase from Allorhizobium ampelinum (strain ATCC BAA-846 / DSM 112012 / S4) (Agrobacterium vitis (strain S4)).